The following is a 707-amino-acid chain: MDSCHKIDYGLYALEILAQYHNVSVNPEEIKHRFDTDGTGLGLTSWLLAAKSLELKVKQVKKTIDRLNFIFLPALVWREDGRHFILTKISKEVNRYLIFDLEQRNPRVLEQSEFEALYQGHIILITSRSSVTGKLAKFDFTWFIPAIIKYRRIFIETLVVSVFLQLFALITPLFFQVVMDKVLVHRGFSTLNVITVALSVVVVFEIILSGLRTYIFAHSTSRIDVELGAKLFRHLLALPISYFESRRVGDTVARVRELDQIRNFLTGQALTSVLDLLFSLIFFAVMWYYSPKLTLVILFSLPCYAAWSVFISPILRRRLDDKFSRNADNQSFLVESVTAINTIKAMAVSPQMTNIWDKQLAGYVAAGFKVTVLATIGQQGIQLIQKTVMIINLWLGAHLVISGDLSIGQLIAFNMLAGQIVAPVIRLAQIWQDFQQVGISVTRLGDVLNSPTESYHGKLTLPEINGDITFRNIRFRYKPDSPVILDNINLSIKQGEVIGIVGRSGSGKSTLTKLIQRFYIPENGQVLIDGHDLALADPNWLRRQVGVVLQDNVLLNRSIIDNISLANPGMSVEKVIYAAKLAGAHDFISELREGYNTIVGEQGAGLSGGQRQRIAIARALVNNPKILIFDEATSALDYESEHVIMRNMHKICKGRTVIIIAHRLSTVKNADRIIVMEKGKIVEQGKHKELLSEPESLYSYLYQLQSD.

In terms of domain architecture, Peptidase C39 spans 3–125 (SCHKIDYGLY…ALYQGHIILI (123 aa)). The active site involves His-83. The 283-residue stretch at 154–436 (FIETLVVSVF…LAQIWQDFQQ (283 aa)) folds into the ABC transmembrane type-1 domain. Helical transmembrane passes span 158-178 (LVVS…FQVV), 191-211 (LNVI…LSGL), 269-289 (ALTS…MWYY), 295-315 (LVIL…SPIL), and 388-408 (VMII…LSIG). Residues 468 to 703 (ITFRNIRFRY…PESLYSYLYQ (236 aa)) enclose the ABC transporter domain. 502 to 509 (GRSGSGKS) contributes to the ATP binding site.

It belongs to the ABC transporter superfamily. Protein-1 exporter (TC 3.A.1.109) family. As to quaternary structure, homodimer.

Its subcellular location is the cell inner membrane. Functionally, part of the ABC transporter complex HlyBD involved in hemolysin export. Transmembrane domains (TMD) form a pore in the inner membrane and the ATP-binding domain (NBD) is responsible for energy generation. The sequence is that of Alpha-hemolysin translocation ATP-binding protein HlyB (hlyB) from Escherichia coli.